The following is a 357-amino-acid chain: Protein BMRF2 (357 aa).

The Virion surface portion of the chain corresponds to 1–11; the sequence is MFSCKQHLSLG. The chain crosses the lipid bilayer at residues 12–32; it reads ACVFCLGLLASTPFIWCFVFA. Over 33-46 the chain is Intravirion; that stretch reads NLLSLEIFSPWQTH. Positions 47–67 form a transmembrane segment; sequence VYRLGFPTACLMAVLWTLVPA. Residues 68–70 are Virion surface-facing; sequence KHA. Residues 71 to 91 are membrane-embedded; the sequence is VRAVTPAIMLNIASALIFFSL. Residues 92–98 lie on the Intravirion side of the membrane; the sequence is RVYSTST. The hydrophobic stretch at 99 to 121 threads the membrane; that stretch reads WVSAPCLFLANLPLLCLWPRLAI. Residues 122–133 are Virion surface-facing; it reads EIVYICPAIHQR. Over 134–154 the chain traverses the membrane; the sequence is FFELGLLLACTIFALSVVSRA. At 155–158 the chain is on the intravirion side; it reads LEVS. The hydrophobic stretch at 159–179 threads the membrane; sequence AVFMSPFFIFLALGSGSLAGA. Over 180–217 the chain is Virion surface; the sequence is RRNQIYTSGLERRRSIFCARGDHSVASLKETLHKCPWD. The Integrin binding site signature appears at 199–201; sequence RGD. A membrane pass occupies residues 218 to 238; the sequence is LLAISALTVLVVCVMIVLHVH. Residues 239–240 lie on the Intravirion side of the membrane; that stretch reads AE. A membrane pass occupies residues 241–261; that stretch reads VFFGLSRYLPLFLCGAMASGG. The Virion surface portion of the chain corresponds to 262–267; that stretch reads LYLGHS. Over 268 to 288 the chain traverses the membrane; sequence SIIACVMATLCTLSSVVVYFL. Topologically, residues 289-298 are intravirion; the sequence is HETLGPLGKT. A transmembrane span lies at residues 299-319; it reads VLFISIFVYYFSGVAALSAAM. Residues 320 to 335 are Virion surface-facing; that stretch reads RYKLKKFVNGPLVHLR. Residues 336–356 are membrane-embedded; sequence VVYMCCFVFTFCEYLLVTFIK. Ser357 is a topological domain (intravirion).

It belongs to the herpesviridae BMRF2 family. In terms of assembly, interacts with BDLF2. Interacts with host beta1 integrin family. Extensively glycosylated by O-linked oligosaccharides.

The protein resides in the virion membrane. It localises to the host cell membrane. In terms of biological role, facilitates virus attachment to oral epithelial cells by binding to host beta1 integrin family. Participates in rearrangement of cellular actin to increase intercellular contacts by binding BDLF2 and thereby promote virus cell-to-cell spreading. This Homo sapiens (Human) protein is Protein BMRF2.